Consider the following 738-residue polypeptide: MTNQYEAVGLKAKEYEGIVEMLGREPNELELNLYGVMWSEHCSYKHSRSMFKHFPTSGPSVLQGPGENAGIVDIGDGLAIAMKIESHNHPSAIEPYQGAATGVGGIIRDIFAMGARPIALLNSLRFGELEGDARVKYLLEGVVEGIAGYGNCMGIPTVGGEVYFNQSYRGNPLVNAMCVGLIEHDAIHRGTASGVGNSIMYVGAATGRDGIGGASFASATLTEESEEKRAAVQVGDPFMEKLLLEACLELLKTGSIIGIQDLGAAGLVSACCETATRGEGGMEIDVLKVPRRETGMVPVEVMISESQERMLLIVERGREEEVNEIVKKWGLHSVIIGRVTNDDKLRIFEGDKVVGEIPAESLDSSGAPRYEPDYAPPADLAELQKLDIESIPEPRDLSSTLRKLLASPNIASKEWIYRQYDHMVRTNTVIKPGSDAAVLRIRGTKKGIALTTDCNSRYCYLDPREGSKIAVVEAARNIVCSGGKPIAITDGLNFGSPETPEGYWQFRESVLGLSEACREMDTPVISGNVSFYNQTEKGSIHPTPIVGMVGLIEDISKTCTMAFKEAGDIIVLLGQTKAEIGGSEYLASIHGQEKGKIPHLNLSLEKRLQKEVLALIQGDLVQSAHDLSEGGLAVGVAECAIAGGIGARVEVNTELRNDIVLFSESQSRFLMTIKPEHLETVQERLKQSNIPHEQLGTVIGNELQMQINGNVVVKESIGELEEIWRGALQCLMESMKID.

Histidine 41 is an active-site residue. Residues tyrosine 44 and lysine 83 each contribute to the ATP site. Glutamate 85 lines the Mg(2+) pocket. Residues 86–89 (SHNH) and arginine 108 each bind substrate. Histidine 87 (proton acceptor) is an active-site residue. Aspartate 109 is a Mg(2+) binding site. Residue glutamine 233 participates in substrate binding. Aspartate 261 contacts Mg(2+). 305 to 307 (ESQ) is a substrate binding site. Residues aspartate 490 and glycine 527 each contribute to the ATP site. Position 528 (asparagine 528) interacts with Mg(2+). Serine 530 is a binding site for substrate.

It belongs to the FGAMS family. Monomer. Part of the FGAM synthase complex composed of 1 PurL, 1 PurQ and 2 PurS subunits.

The protein localises to the cytoplasm. It catalyses the reaction N(2)-formyl-N(1)-(5-phospho-beta-D-ribosyl)glycinamide + L-glutamine + ATP + H2O = 2-formamido-N(1)-(5-O-phospho-beta-D-ribosyl)acetamidine + L-glutamate + ADP + phosphate + H(+). It functions in the pathway purine metabolism; IMP biosynthesis via de novo pathway; 5-amino-1-(5-phospho-D-ribosyl)imidazole from N(2)-formyl-N(1)-(5-phospho-D-ribosyl)glycinamide: step 1/2. Functionally, part of the phosphoribosylformylglycinamidine synthase complex involved in the purines biosynthetic pathway. Catalyzes the ATP-dependent conversion of formylglycinamide ribonucleotide (FGAR) and glutamine to yield formylglycinamidine ribonucleotide (FGAM) and glutamate. The FGAM synthase complex is composed of three subunits. PurQ produces an ammonia molecule by converting glutamine to glutamate. PurL transfers the ammonia molecule to FGAR to form FGAM in an ATP-dependent manner. PurS interacts with PurQ and PurL and is thought to assist in the transfer of the ammonia molecule from PurQ to PurL. The chain is Phosphoribosylformylglycinamidine synthase subunit PurL from Alkaliphilus metalliredigens (strain QYMF).